Reading from the N-terminus, the 148-residue chain is Urease accessory protein UreE (148 aa).

This sequence belongs to the UreE family.

The protein resides in the cytoplasm. Involved in urease metallocenter assembly. Binds nickel. Probably functions as a nickel donor during metallocenter assembly. This Lysinibacillus sphaericus (strain C3-41) protein is Urease accessory protein UreE.